The primary structure comprises 196 residues: Pyridoxal 5'-phosphate synthase subunit PdxT (196 aa).

47-49 (GES) contributes to the L-glutamine binding site. Cysteine 79 (nucleophile) is an active-site residue. L-glutamine-binding positions include arginine 106 and 134 to 135 (IR). Catalysis depends on charge relay system residues histidine 170 and glutamate 172.

This sequence belongs to the glutaminase PdxT/SNO family. As to quaternary structure, in the presence of PdxS, forms a dodecamer of heterodimers. Only shows activity in the heterodimer.

It carries out the reaction aldehydo-D-ribose 5-phosphate + D-glyceraldehyde 3-phosphate + L-glutamine = pyridoxal 5'-phosphate + L-glutamate + phosphate + 3 H2O + H(+). It catalyses the reaction L-glutamine + H2O = L-glutamate + NH4(+). It participates in cofactor biosynthesis; pyridoxal 5'-phosphate biosynthesis. Functionally, catalyzes the hydrolysis of glutamine to glutamate and ammonia as part of the biosynthesis of pyridoxal 5'-phosphate. The resulting ammonia molecule is channeled to the active site of PdxS. The sequence is that of Pyridoxal 5'-phosphate synthase subunit PdxT from Bacillus cereus (strain B4264).